A 278-amino-acid chain; its full sequence is ATPase SWSAP1 (278 aa).

The disordered stretch occupies residues 237–278; the sequence is SPEKKDSSAGSQSLTLGCDNLPGPGSPLDGILTSETGADSKT. Over residues 269–278 the composition is skewed to polar residues; that stretch reads TSETGADSKT.

As to quaternary structure, interacts with ZSWIM7; they form a functional complex involved in homologous recombination repair and stabilize each other. Interacts with RAD51, RAD51B, RAD51C, RAD51D and XRCC3; involved in homologous recombination repair.

The protein resides in the nucleus. In terms of biological role, ATPase which is preferentially stimulated by single-stranded DNA and is involved in homologous recombination repair (HRR). Has a DNA-binding activity which is independent of its ATPase activity. This chain is ATPase SWSAP1 (Swsap1), found in Mus musculus (Mouse).